Reading from the N-terminus, the 572-residue chain is Phospholipase B-like protein B (572 aa).

An N-terminal signal peptide occupies residues 1–28 (MNKLKSNFILNIVILFTILIFNINFINC). N-linked (GlcNAc...) asparagine glycosylation is found at Asn-73, Asn-138, Asn-219, Asn-427, Asn-544, and Asn-564.

The protein belongs to the phospholipase B-like family.

It localises to the secreted. Functionally, probable phospholipase. The sequence is that of Phospholipase B-like protein B (plbB) from Dictyostelium discoideum (Social amoeba).